The chain runs to 553 residues: Phosphoglucomutase (553 aa).

The interval 1-24 (MQATVKRYPTTPISGQTMGTSGLR) is disordered. A compositionally biased stretch (polar residues) spans 11–20 (TPISGQTMGT). Substrate-binding positions include Thr-20, Arg-24, 117-118 (SH), and Lys-131. The active-site Phosphoserine intermediate is Ser-117. Ser-117 lines the Mg(2+) pocket. Asp-289, Asp-291, and Asp-293 together coordinate Mg(2+). Residues 293–294 (DR), Thr-352, 371–373 (EES), Lys-384, and Arg-509 contribute to the substrate site.

The protein belongs to the phosphohexose mutase family. Mg(2+) is required as a cofactor.

Its subcellular location is the cytoplasm. It catalyses the reaction alpha-D-glucose 1-phosphate = alpha-D-glucose 6-phosphate. Its function is as follows. This enzyme participates in both the breakdown and synthesis of glucose. The protein is Phosphoglucomutase (pgm) of Entamoeba dispar.